The sequence spans 561 residues: DNA ligase B (561 aa).

The N6-AMP-lysine intermediate role is filled by Lys-125.

This sequence belongs to the NAD-dependent DNA ligase family. LigB subfamily.

The enzyme catalyses NAD(+) + (deoxyribonucleotide)n-3'-hydroxyl + 5'-phospho-(deoxyribonucleotide)m = (deoxyribonucleotide)n+m + AMP + beta-nicotinamide D-nucleotide.. Its function is as follows. Catalyzes the formation of phosphodiester linkages between 5'-phosphoryl and 3'-hydroxyl groups in double-stranded DNA using NAD as a coenzyme and as the energy source for the reaction. The polypeptide is DNA ligase B (Salmonella dublin (strain CT_02021853)).